The chain runs to 251 residues: Triosephosphate isomerase (251 aa).

12-14 (NWK) serves as a coordination point for substrate. Catalysis depends on His99, which acts as the Electrophile. Catalysis depends on Glu169, which acts as the Proton acceptor. Substrate contacts are provided by residues Gly175, Ser214, and 235–236 (GG).

It belongs to the triosephosphate isomerase family. As to quaternary structure, homodimer.

Its subcellular location is the cytoplasm. It carries out the reaction D-glyceraldehyde 3-phosphate = dihydroxyacetone phosphate. It participates in carbohydrate biosynthesis; gluconeogenesis. Its pathway is carbohydrate degradation; glycolysis; D-glyceraldehyde 3-phosphate from glycerone phosphate: step 1/1. Functionally, involved in the gluconeogenesis. Catalyzes stereospecifically the conversion of dihydroxyacetone phosphate (DHAP) to D-glyceraldehyde-3-phosphate (G3P). This Bradyrhizobium sp. (strain ORS 278) protein is Triosephosphate isomerase.